Reading from the N-terminus, the 303-residue chain is Coenzyme PQQ synthesis protein B (303 aa).

This sequence belongs to the PqqB family.

It functions in the pathway cofactor biosynthesis; pyrroloquinoline quinone biosynthesis. Its function is as follows. May be involved in the transport of PQQ or its precursor to the periplasm. The protein is Coenzyme PQQ synthesis protein B of Pseudomonas putida (strain ATCC 700007 / DSM 6899 / JCM 31910 / BCRC 17059 / LMG 24140 / F1).